The sequence spans 357 residues: Histidinol-phosphate aminotransferase 1 (357 aa).

Lysine 217 carries the N6-(pyridoxal phosphate)lysine modification.

It belongs to the class-II pyridoxal-phosphate-dependent aminotransferase family. Histidinol-phosphate aminotransferase subfamily. Homodimer. The cofactor is pyridoxal 5'-phosphate.

It catalyses the reaction L-histidinol phosphate + 2-oxoglutarate = 3-(imidazol-4-yl)-2-oxopropyl phosphate + L-glutamate. It participates in amino-acid biosynthesis; L-histidine biosynthesis; L-histidine from 5-phospho-alpha-D-ribose 1-diphosphate: step 7/9. In Burkholderia lata (strain ATCC 17760 / DSM 23089 / LMG 22485 / NCIMB 9086 / R18194 / 383), this protein is Histidinol-phosphate aminotransferase 1.